Reading from the N-terminus, the 459-residue chain is MAASCGGRVVVFPFPFQGHFNPVMRLARALHARGVGITVFHTAGARAPDPADYPADYRFVPVPVEVAPELMASEDIAAIVTALNAACEAPFRDRLSALLSAADGEAGEAGGRVRCVLTDVSWDAVLSAARGLGVPALGVMTASAATFRVYMAYRTLVDKGYLPVREERKDDAVAELPPYRVKDLLRHETCDLEEFADLLGRVIAAARLSSGLIFHTFPFIEAGTLGEIRDDMSVPVYAVAPLNKLVPAATASLHGEVQADRGCLRWLDAQRARSVLYVSFGSMAAMDPHEFVELAWGLADAGRPFVWVVRPNLIRGFESGALPDGVEDRVRGRGVVVSWAPQEEVLAHPAVGGFFTHCGWNSTVEAVSEGVPMICHPRHGDQYGNARYVCHVWKVGTEVAGDQLERGEIKAAIDRLMGGSEEGEGIRKRMNELKIAADKGIDESAGSDLTNLVHLINSY.

The active-site Proton acceptor is the H19. H19 lines the an anthocyanidin pocket. The active-site Charge relay is the D119. UDP-alpha-D-glucose is bound by residues T141, A340, Q342, H357, W360, N361, S362, and E365. An anthocyanidin is bound at residue G380. Residues D381 and Q382 each coordinate UDP-alpha-D-glucose.

This sequence belongs to the UDP-glycosyltransferase family. It depends on Mg(2+) as a cofactor. Ca(2+) is required as a cofactor. As to expression, expressed at the same levels in roots and shoots.

It carries out the reaction DIMBOA + UDP-alpha-D-glucose = DIMBOA beta-D-glucoside + UDP + H(+). It catalyses the reaction DIBOA + UDP-alpha-D-glucose = DIBOA beta-D-glucoside + UDP + H(+). Functionally, glucosyltransferase involved in the last step of benzoxazinoid glucoside biosynthesis. Catalyzes the glucosylation of hydroxamic acids utilizing UDP-glucose as glucose doner, reducing the toxicity of these natural insecticides for storage. Can use DIMBOA and DIBOA as substrates, HMBOA (2-hydroxy-7-methoxy-2H-1,4-benzoxazin-3(4H)-one) and HBOA (2-hydroxy-2H-1,4-benzoxazin-3(4H)-one) with a lower efficiency, but not indole acetic acid or quercitin. The protein is DIMBOA UDP-glucosyltransferase BX8 (Bx8) of Zea mays (Maize).